The sequence spans 477 residues: tRNA-2-methylthio-N(6)-dimethylallyladenosine synthase (477 aa).

One can recognise an MTTase N-terminal domain in the interval 9–129 (RKLHIKSYGC…LPQLLARAKT (121 aa)). The [4Fe-4S] cluster site is built by Cys-18, Cys-54, Cys-92, Cys-170, Cys-174, and Cys-177. The region spanning 156 to 386 (RSRGISAFVT…QLQNLIDSQQ (231 aa)) is the Radical SAM core domain. The 63-residue stretch at 391–453 (RTALGRTIDV…RYSLFGTLAS (63 aa)) folds into the TRAM domain. Positions 454–477 (KPTSGEPSNHAATGGAQFQTTAGA) are disordered. The segment covering 464-477 (AATGGAQFQTTAGA) has biased composition (low complexity).

The protein belongs to the methylthiotransferase family. MiaB subfamily. Monomer. [4Fe-4S] cluster serves as cofactor.

It localises to the cytoplasm. It carries out the reaction N(6)-dimethylallyladenosine(37) in tRNA + (sulfur carrier)-SH + AH2 + 2 S-adenosyl-L-methionine = 2-methylsulfanyl-N(6)-dimethylallyladenosine(37) in tRNA + (sulfur carrier)-H + 5'-deoxyadenosine + L-methionine + A + S-adenosyl-L-homocysteine + 2 H(+). Functionally, catalyzes the methylthiolation of N6-(dimethylallyl)adenosine (i(6)A), leading to the formation of 2-methylthio-N6-(dimethylallyl)adenosine (ms(2)i(6)A) at position 37 in tRNAs that read codons beginning with uridine. This Nitrobacter winogradskyi (strain ATCC 25391 / DSM 10237 / CIP 104748 / NCIMB 11846 / Nb-255) protein is tRNA-2-methylthio-N(6)-dimethylallyladenosine synthase.